Consider the following 918-residue polypeptide: Cell surface glycoprotein 1 (918 aa).

Positions Met1 to Ala34 are cleaved as a signal peptide. Residues Asn37, Asn56, Asn110, Asn219, Asn250, Asn261, and Asn291 are each glycosylated (N-linked (GlcNAc...) asparagine). N-linked (GalNAc...) asparagine glycosylation is present at Asn306. 14 N-linked (GlcNAc...) asparagine glycosylation sites follow: Asn318, Asn343, Asn392, Asn434, Asn487, Asn541, Asn555, Asn572, Asn585, Asn614, Asn715, Asn776, Asn836, and Asn845. Positions His815–Gly894 are disordered. Residues Tyr833–Val846 show a composition bias toward polar residues. Residues Val849–Asp875 show a composition bias toward acidic residues. The chain crosses the membrane as a helical span at residues Gly894 to Val914. Residues Pro895–Phe897 carry the PGF sorting signal motif.

This sequence belongs to the halobacterial S-layer protein family. N-glycosylated on Asn-306; this N-linked glycan is a branched trisaccharide containing 2-amino-6-sulfo-2,6-dideoxy-glucose (sulfoquinovosamine). Post-translationally, cleaved by the archaeosortase ArtA at the C-terminus, with removal of a short hydrophobic segment. In terms of processing, lipidation.

The protein resides in the secreted. It is found in the cell wall. It localises to the S-layer. The protein localises to the cell membrane. Its function is as follows. S-layer protein. The S-layer is a paracrystalline mono-layered assembly of proteins which coat the surface of the cell. In H.hispanica, the S-layer contains two different glycoproteins, Slg1 and Slg2, which share highly similar amino acid sequences. This chain is Cell surface glycoprotein 1, found in Haloarcula hispanica (strain ATCC 33960 / DSM 4426 / JCM 8911 / NBRC 102182 / NCIMB 2187 / VKM B-1755).